The chain runs to 126 residues: 3-aminoacrylate deaminase RutC (126 aa).

The protein belongs to the RutC family.

The enzyme catalyses (Z)-3-aminoacrylate + H2O + H(+) = 3-oxopropanoate + NH4(+). In terms of biological role, involved in pyrimidine catabolism. Catalyzes the deamination of 3-aminoacrylate to malonic semialdehyde, a reaction that can also occur spontaneously. RutC may facilitate the reaction and modulate the metabolic fitness, rather than catalyzing essential functions. The protein is 3-aminoacrylate deaminase RutC of Acinetobacter baylyi (strain ATCC 33305 / BD413 / ADP1).